A 169-amino-acid chain; its full sequence is ATP synthase subunit b (169 aa).

A helical transmembrane segment spans residues 13-33 (LFLFQLINFLIIVFILKKFLF).

This sequence belongs to the ATPase B chain family. F-type ATPases have 2 components, F(1) - the catalytic core - and F(0) - the membrane proton channel. F(1) has five subunits: alpha(3), beta(3), gamma(1), delta(1), epsilon(1). F(0) has three main subunits: a(1), b(2) and c(10-14). The alpha and beta chains form an alternating ring which encloses part of the gamma chain. F(1) is attached to F(0) by a central stalk formed by the gamma and epsilon chains, while a peripheral stalk is formed by the delta and b chains.

The protein localises to the cell inner membrane. F(1)F(0) ATP synthase produces ATP from ADP in the presence of a proton or sodium gradient. F-type ATPases consist of two structural domains, F(1) containing the extramembraneous catalytic core and F(0) containing the membrane proton channel, linked together by a central stalk and a peripheral stalk. During catalysis, ATP synthesis in the catalytic domain of F(1) is coupled via a rotary mechanism of the central stalk subunits to proton translocation. Functionally, component of the F(0) channel, it forms part of the peripheral stalk, linking F(1) to F(0). The sequence is that of ATP synthase subunit b from Endomicrobium trichonymphae.